The sequence spans 536 residues: Multicopper oxidase CueO (536 aa).

Positions 1–28 form a signal peptide, tat-type signal; it reads MLRRDFLKYSVALGVASALPLWSRAAFA. Plastocyanin-like domains follow at residues 53-165, 229-295, and 424-536; these read KAGQ…IEDD, GWLR…AFDL, and FHNA…GFTV. The Cu cation site is built by H101, H103, H141, and H143. Cu cation-binding residues include H463, H466, H468, H519, C520, H521, and H525.

It belongs to the multicopper oxidase family. Monomer. Cu cation is required as a cofactor. Post-translationally, predicted to be exported by the Tat system. The position of the signal peptide cleavage has not been experimentally proven.

It localises to the periplasm. It catalyses the reaction 4 Cu(+) + O2 + 4 H(+) = 4 Cu(2+) + 2 H2O. Its function is as follows. Multicopper oxidase involved in copper homeostasis and copper tolerance under both aerobic and anaerobic conditions. Is responsible for the oxidation of Cu(+) to the less harmful Cu(2+) in the periplasm, thereby preventing Cu(+) from entering the cytoplasm. This Salmonella typhimurium (strain LT2 / SGSC1412 / ATCC 700720) protein is Multicopper oxidase CueO (cueO).